Consider the following 256-residue polypeptide: Hemin import ATP-binding protein HmuV (256 aa).

The region spanning 2 to 238 (ISAQNLVYSL…QALTMLYGAD (237 aa)) is the ABC transporter domain. 34–41 (GPNGAGKS) lines the ATP pocket.

This sequence belongs to the ABC transporter superfamily. Heme (hemin) importer (TC 3.A.1.14.5) family. In terms of assembly, the complex is composed of two ATP-binding proteins (HmuV), two transmembrane proteins (HmuU) and a solute-binding protein (HmuT).

Its subcellular location is the cell inner membrane. Functionally, part of the ABC transporter complex HmuTUV involved in hemin import. Responsible for energy coupling to the transport system. This chain is Hemin import ATP-binding protein HmuV, found in Escherichia coli O6:K15:H31 (strain 536 / UPEC).